We begin with the raw amino-acid sequence, 136 residues long: uncharacterized protein (136 aa).

This is an uncharacterized protein from Bacillus subtilis (strain 168).